The chain runs to 336 residues: UPF0324 membrane protein PM1461 (336 aa).

A run of 10 helical transmembrane segments spans residues 5–23 (TLFLGLVFIGILTFLVNLL), 30–52 (LNANLSALTIAILLGILFGNTFY), 62–84 (GVIFAKGTLLRLGIILYGFRLTL), 91–113 (GINAIATDTIMLISTFLLTLWLG), 123–140 (IVYLTAGGCSICGAAAIM), 153–175 (VSIAVAVIVIFGTISMFLYPLMY), 221–238 (MIRVMMLAPFLLLVSWLL), 250–271 (ISIPWFAFLFILMAVINSFSLI), 275–297 (IVAWIVEIDSLLLIAAMTALGLT), and 310–332 (PLILGALVLCWLVIGGFFVNVGI).

Belongs to the UPF0324 family.

It localises to the cell membrane. The sequence is that of UPF0324 membrane protein PM1461 from Pasteurella multocida (strain Pm70).